The following is a 468-amino-acid chain: Adenylyltransferase and sulfurtransferase MOCS3-1 (468 aa).

ATP is bound by residues Gly-111, Asp-132, 139 to 143, Lys-156, and 200 to 201; these read NNLHR and DN. Zn(2+)-binding residues include Cys-241 and Cys-244. Cys-258 (glycyl thioester intermediate; for adenylyltransferase activity) is an active-site residue. Zn(2+)-binding residues include Cys-316 and Cys-319. The Rhodanese domain maps to 371-466; sequence DGEPHLLLDV…WGRDVDPDFP (96 aa). Cys-426 serves as the catalytic Cysteine persulfide intermediate; for sulfurtransferase activity.

This sequence in the N-terminal section; belongs to the HesA/MoeB/ThiF family. UBA4 subfamily. Zn(2+) is required as a cofactor.

Its subcellular location is the cytoplasm. The catalysed reaction is [molybdopterin-synthase sulfur-carrier protein]-C-terminal Gly-Gly + ATP + H(+) = [molybdopterin-synthase sulfur-carrier protein]-C-terminal Gly-Gly-AMP + diphosphate. The enzyme catalyses [molybdopterin-synthase sulfur-carrier protein]-C-terminal Gly-Gly-AMP + S-sulfanyl-L-cysteinyl-[cysteine desulfurase] + AH2 = [molybdopterin-synthase sulfur-carrier protein]-C-terminal-Gly-aminoethanethioate + L-cysteinyl-[cysteine desulfurase] + A + AMP + 2 H(+). It participates in tRNA modification; 5-methoxycarbonylmethyl-2-thiouridine-tRNA biosynthesis. It functions in the pathway cofactor biosynthesis; molybdopterin biosynthesis. Functionally, plays a central role in 2-thiolation of mcm(5)S(2)U at tRNA wobble positions of cytosolic tRNA(Lys), tRNA(Glu) and tRNA(Gln). Also essential during biosynthesis of the molybdenum cofactor. Acts by mediating the C-terminal thiocarboxylation of sulfur carriers URM1 and MOCS2A. Its N-terminus first activates URM1 and MOCS2A as acyl-adenylates (-COAMP), then the persulfide sulfur on the catalytic cysteine is transferred to URM1 and MOCS2A to form thiocarboxylation (-COSH) of their C-terminus. The reaction probably involves hydrogen sulfide that is generated from the persulfide intermediate and that acts as a nucleophile towards URM1 and MOCS2A. Subsequently, a transient disulfide bond is formed. Does not use thiosulfate as sulfur donor; NFS1 probably acting as a sulfur donor for thiocarboxylation reactions. This Zea mays (Maize) protein is Adenylyltransferase and sulfurtransferase MOCS3-1.